We begin with the raw amino-acid sequence, 150 residues long: Transcriptional repressor NrdR (150 aa).

Residues 3–33 (CPFCGGESRVLESRPASDEEAVRRRRECLAC) fold into a zinc finger. In terms of domain architecture, ATP-cone spans 48-138 (LIVVKKDGRR…VYREFKDLNE (91 aa)).

The protein belongs to the NrdR family. Requires Zn(2+) as cofactor.

Its function is as follows. Negatively regulates transcription of bacterial ribonucleotide reductase nrd genes and operons by binding to NrdR-boxes. In Symbiobacterium thermophilum (strain DSM 24528 / JCM 14929 / IAM 14863 / T), this protein is Transcriptional repressor NrdR.